Reading from the N-terminus, the 226-residue chain is N-(5'-phosphoribosyl)anthranilate isomerase (226 aa).

The protein belongs to the TrpF family.

The catalysed reaction is N-(5-phospho-beta-D-ribosyl)anthranilate = 1-(2-carboxyphenylamino)-1-deoxy-D-ribulose 5-phosphate. The protein operates within amino-acid biosynthesis; L-tryptophan biosynthesis; L-tryptophan from chorismate: step 3/5. This is N-(5'-phosphoribosyl)anthranilate isomerase (TRP1) from Candida albicans (strain SC5314 / ATCC MYA-2876) (Yeast).